The following is a 661-amino-acid chain: Cyclic di-GMP phosphodiesterase PdeR (661 aa).

The 71-residue stretch at 109–179 (GLSFAEQVVS…RRNNRVFFRS (71 aa)) folds into the PAS domain. The region spanning 265–397 (NKVGVVYLDL…GRGQFCVFTP (133 aa)) is the GGDEF domain. The EAL domain occupies 406–658 (YLWLDTNLRK…AFERWYKRYL (253 aa)).

In terms of assembly, interacts with DgcM and MlrA.

The catalysed reaction is 3',3'-c-di-GMP + H2O = 5'-phosphoguanylyl(3'-&gt;5')guanosine + H(+). Part of a signaling cascade that regulates curli biosynthesis. The cascade is composed of two cyclic-di-GMP (c-di-GMP) control modules, in which c-di-GMP controlled by the DgcE/PdeH pair (module I) regulates the activity of the DgcM/PdeR pair (module II), which in turn regulates activity of the transcription factor MlrA and expression of the master biofilm regulator csgD. PdeR acts as a trigger enzyme that connects modules I and II. It inhibits DgcM and MlrA by direct interaction. Inhibition is relieved when PdeR binds and degrades c-di-GMP generated by module I. This chain is Cyclic di-GMP phosphodiesterase PdeR, found in Escherichia coli (strain K12).